The following is a 480-amino-acid chain: tRNA-2-methylthio-N(6)-dimethylallyladenosine synthase (480 aa).

The 119-residue stretch at 43–161 (KLYCLNTFGC…FPELLYSAMD (119 aa)) folds into the MTTase N-terminal domain. [4Fe-4S] cluster contacts are provided by Cys-52, Cys-88, Cys-122, Cys-198, Cys-202, and Cys-205. Positions 184–414 (RKDGVKAWVT…LETQNRISKE (231 aa)) constitute a Radical SAM core domain. A TRAM domain is found at 417–480 (DTFLGKVVEV…TWSLEGSIVR (64 aa)).

The protein belongs to the methylthiotransferase family. MiaB subfamily. As to quaternary structure, monomer. It depends on [4Fe-4S] cluster as a cofactor.

The protein resides in the cytoplasm. It catalyses the reaction N(6)-dimethylallyladenosine(37) in tRNA + (sulfur carrier)-SH + AH2 + 2 S-adenosyl-L-methionine = 2-methylsulfanyl-N(6)-dimethylallyladenosine(37) in tRNA + (sulfur carrier)-H + 5'-deoxyadenosine + L-methionine + A + S-adenosyl-L-homocysteine + 2 H(+). Its function is as follows. Catalyzes the methylthiolation of N6-(dimethylallyl)adenosine (i(6)A), leading to the formation of 2-methylthio-N6-(dimethylallyl)adenosine (ms(2)i(6)A) at position 37 in tRNAs that read codons beginning with uridine. The chain is tRNA-2-methylthio-N(6)-dimethylallyladenosine synthase from Acetivibrio thermocellus (strain ATCC 27405 / DSM 1237 / JCM 9322 / NBRC 103400 / NCIMB 10682 / NRRL B-4536 / VPI 7372) (Clostridium thermocellum).